The primary structure comprises 556 residues: 2-succinyl-5-enolpyruvyl-6-hydroxy-3-cyclohexene-1-carboxylate synthase (556 aa).

The protein belongs to the TPP enzyme family. MenD subfamily. Homodimer. Requires Mg(2+) as cofactor. Mn(2+) serves as cofactor. It depends on thiamine diphosphate as a cofactor.

It catalyses the reaction isochorismate + 2-oxoglutarate + H(+) = 5-enolpyruvoyl-6-hydroxy-2-succinyl-cyclohex-3-ene-1-carboxylate + CO2. The protein operates within quinol/quinone metabolism; 1,4-dihydroxy-2-naphthoate biosynthesis; 1,4-dihydroxy-2-naphthoate from chorismate: step 2/7. Its pathway is quinol/quinone metabolism; menaquinone biosynthesis. Functionally, catalyzes the thiamine diphosphate-dependent decarboxylation of 2-oxoglutarate and the subsequent addition of the resulting succinic semialdehyde-thiamine pyrophosphate anion to isochorismate to yield 2-succinyl-5-enolpyruvyl-6-hydroxy-3-cyclohexene-1-carboxylate (SEPHCHC). In Escherichia coli (strain UTI89 / UPEC), this protein is 2-succinyl-5-enolpyruvyl-6-hydroxy-3-cyclohexene-1-carboxylate synthase.